Reading from the N-terminus, the 296-residue chain is Acetylglutamate kinase (296 aa).

Substrate-binding positions include 66–67, arginine 88, and asparagine 191; that span reads GG.

Belongs to the acetylglutamate kinase family. ArgB subfamily.

The protein localises to the cytoplasm. The enzyme catalyses N-acetyl-L-glutamate + ATP = N-acetyl-L-glutamyl 5-phosphate + ADP. It functions in the pathway amino-acid biosynthesis; L-arginine biosynthesis; N(2)-acetyl-L-ornithine from L-glutamate: step 2/4. Functionally, catalyzes the ATP-dependent phosphorylation of N-acetyl-L-glutamate. The polypeptide is Acetylglutamate kinase (Lawsonia intracellularis (strain PHE/MN1-00)).